A 112-amino-acid polypeptide reads, in one-letter code: Photosystem II reaction center Psb28 protein (112 aa).

Belongs to the Psb28 family. Part of the photosystem II complex.

It is found in the cellular thylakoid membrane. This Synechocystis sp. (strain ATCC 27184 / PCC 6803 / Kazusa) protein is Photosystem II reaction center Psb28 protein.